The chain runs to 178 residues: Large ribosomal subunit protein uL6 (178 aa).

This sequence belongs to the universal ribosomal protein uL6 family. In terms of assembly, part of the 50S ribosomal subunit.

This protein binds to the 23S rRNA, and is important in its secondary structure. It is located near the subunit interface in the base of the L7/L12 stalk, and near the tRNA binding site of the peptidyltransferase center. The chain is Large ribosomal subunit protein uL6 from Streptococcus pneumoniae serotype 4 (strain ATCC BAA-334 / TIGR4).